Consider the following 831-residue polypeptide: Multiphosphoryl transfer protein (831 aa).

In terms of domain architecture, HPr spans 1–90 (MLTIQFLCPL…EYILVRFIDS (90 aa)). The active-site Pros-phosphohistidine intermediate; for HPr activity is the H15. H15 carries the post-translational modification Phosphohistidine; by EI. The interval 119 to 650 (GNVLASGVGV…AVKSQLRQLD (532 aa)) is PTS EI. Catalysis depends on H298, which acts as the Tele-phosphohistidine intermediate; for PTS EI activity. H298 carries the phosphohistidine; by autocatalysis modification. Residues R405 and R441 each coordinate phosphoenolpyruvate. Mg(2+) is bound by residues E540 and D564. Residues 563–564 (ND) and R574 contribute to the phosphoenolpyruvate site. C611 serves as the catalytic Proton donor; for EI activity. A PTS EIIA type-2 domain is found at 685 to 828 (PLLALENIFV…QSILTLLETE (144 aa)). H747 functions as the Tele-phosphohistidine intermediate; for PTS EIIA activity in the catalytic mechanism. A Phosphohistidine; by HPr modification is found at H747.

This sequence belongs to the PEP-utilizing enzyme family. Mg(2+) serves as cofactor.

It localises to the cytoplasm. It catalyses the reaction L-histidyl-[protein] + phosphoenolpyruvate = N(pros)-phospho-L-histidyl-[protein] + pyruvate. It carries out the reaction D-fructose(out) + N(pros)-phospho-L-histidyl-[protein] = D-fructose 1-phosphate(in) + L-histidyl-[protein]. In terms of biological role, multifunctional protein that includes general (non sugar-specific) and sugar-specific components of the phosphoenolpyruvate-dependent sugar phosphotransferase system (sugar PTS). This major carbohydrate active transport system catalyzes the phosphorylation of incoming sugar substrates concomitantly with their translocation across the cell membrane. The enzyme II FryABC PTS system is involved in fructose transport. This is Multiphosphoryl transfer protein (fryA) from Shigella flexneri.